The following is a 127-amino-acid chain: Holo-[acyl-carrier-protein] synthase (127 aa).

Mg(2+)-binding residues include D9 and E58.

It belongs to the P-Pant transferase superfamily. AcpS family. Requires Mg(2+) as cofactor.

The protein resides in the cytoplasm. It carries out the reaction apo-[ACP] + CoA = holo-[ACP] + adenosine 3',5'-bisphosphate + H(+). Its function is as follows. Transfers the 4'-phosphopantetheine moiety from coenzyme A to a Ser of acyl-carrier-protein. This is Holo-[acyl-carrier-protein] synthase from Shewanella baltica (strain OS185).